The following is a 302-amino-acid chain: 4-hydroxy-tetrahydrodipicolinate synthase (302 aa).

Pyruvate is bound at residue Thr-55. The Proton donor/acceptor role is filled by Tyr-144. Lys-172 acts as the Schiff-base intermediate with substrate in catalysis. Residue Val-214 coordinates pyruvate.

Belongs to the DapA family. As to quaternary structure, homotetramer; dimer of dimers.

The protein localises to the cytoplasm. It carries out the reaction L-aspartate 4-semialdehyde + pyruvate = (2S,4S)-4-hydroxy-2,3,4,5-tetrahydrodipicolinate + H2O + H(+). It functions in the pathway amino-acid biosynthesis; L-lysine biosynthesis via DAP pathway; (S)-tetrahydrodipicolinate from L-aspartate: step 3/4. Catalyzes the condensation of (S)-aspartate-beta-semialdehyde [(S)-ASA] and pyruvate to 4-hydroxy-tetrahydrodipicolinate (HTPA). This is 4-hydroxy-tetrahydrodipicolinate synthase from Synechococcus sp. (strain CC9605).